A 124-amino-acid polypeptide reads, in one-letter code: Late embryogenesis abundant protein 37 (124 aa).

A mitochondrion-targeting transit peptide spans 1-35; the sequence is MSQSLFNLKSLSRSINNTIRMRRYIVITKASQRAY.

The protein belongs to the LEA type 3 family.

It localises to the mitochondrion. The chain is Late embryogenesis abundant protein 37 from Arabidopsis thaliana (Mouse-ear cress).